A 286-amino-acid polypeptide reads, in one-letter code: 3-hydroxyanthranilate 3,4-dioxygenase (286 aa).

A domain A (catalytic) region spans residues 1–160 (MERPVRVKAW…SEQYRTGKPN (160 aa)). O2 is bound at residue Arg-43. 3 residues coordinate Fe cation: His-47, Glu-53, and His-91. Position 53 (Glu-53) interacts with substrate. Substrate-binding residues include Arg-95 and Glu-105. Residues 161–177 (PDQLLKEPPFPLSTRSV) are linker. The interval 178–286 (MEPMCLEAWL…QDPACKKSLG (109 aa)) is domain B.

It belongs to the 3-HAO family. Monomer. The cofactor is Fe(2+).

It localises to the cytoplasm. Its subcellular location is the cytosol. The enzyme catalyses 3-hydroxyanthranilate + O2 = (2Z,4Z)-2-amino-3-carboxymuconate 6-semialdehyde. The protein operates within cofactor biosynthesis; NAD(+) biosynthesis; quinolinate from L-kynurenine: step 3/3. Catalyzes the oxidative ring opening of 3-hydroxyanthranilate to 2-amino-3-carboxymuconate semialdehyde, which spontaneously cyclizes to quinolinate. In Bos taurus (Bovine), this protein is 3-hydroxyanthranilate 3,4-dioxygenase.